We begin with the raw amino-acid sequence, 65 residues long: UPF0434 protein HSM_0997 (65 aa).

The protein belongs to the UPF0434 family.

This Histophilus somni (strain 2336) (Haemophilus somnus) protein is UPF0434 protein HSM_0997.